Reading from the N-terminus, the 312-residue chain is uncharacterized protein (312 aa).

The Extracellular portion of the chain corresponds to 1 to 14; that stretch reads MSIVETCISFVSTN. The chain crosses the membrane as a helical span at residues 15–35; sequence PFYPFCTGLLLNCVVTPLYFW. Over 36–41 the chain is Cytoplasmic; it reads KTQNGR. The helical transmembrane segment at 42–62 threads the bilayer; that stretch reads IVVVSLLQFVVLYATAFISIG. The Extracellular segment spans residues 63-179; sequence TDKSLYRNKW…LEYDQDTATE (117 aa). One can recognise an FAD-binding FR-type domain in the interval 70-173; sequence NKWVALPLSK…KGPLGELEYD (104 aa). A helical membrane pass occupies residues 180–200; the sequence is LGIIAGGSGITPVLQVLQEII. At 201-312 the chain is on the cytoplasmic side; that stretch reads PSPEDLTHIS…GNGTDKVFVF (112 aa).

Belongs to the flavoprotein pyridine nucleotide cytochrome reductase family. FAD is required as a cofactor.

It is found in the membrane. This is an uncharacterized protein from Saccharomyces cerevisiae (strain ATCC 204508 / S288c) (Baker's yeast).